We begin with the raw amino-acid sequence, 218 residues long: Superoxide dismutase [Mn], mitochondrial (218 aa).

A mitochondrion-targeting transit peptide spans 1 to 21 (MLRFLSKNSVAAIRNVSIARG). Mn(2+)-binding residues include H50 and H96. A Phosphoserine modification is found at S129. Residues D181 and H185 each contribute to the Mn(2+) site.

The protein belongs to the iron/manganese superoxide dismutase family. Homodimer. It depends on Mn(2+) as a cofactor.

It localises to the mitochondrion matrix. It catalyses the reaction 2 superoxide + 2 H(+) = H2O2 + O2. Functionally, destroys superoxide anion radicals which are normally produced within the cells and which are toxic to biological systems. The chain is Superoxide dismutase [Mn], mitochondrial (sod2) from Schizosaccharomyces pombe (strain 972 / ATCC 24843) (Fission yeast).